A 494-amino-acid chain; its full sequence is Fumigaclavine B O-acetyltransferase easN (494 aa).

The protein belongs to the fumigaclavine B O-acetyltransferase family. In terms of assembly, monomer.

It carries out the reaction fumigaclavine B + acetyl-CoA = fumigaclavine A + CoA. It participates in alkaloid biosynthesis; ergot alkaloid biosynthesis. In terms of biological role, fumigaclavine B O-acetyltransferase; part of the gene cluster that mediates the biosynthesis of fumiclavanine C, a fungal ergot alkaloid. DmaW catalyzes the first step of ergot alkaloid biosynthesis by condensing dimethylallyl diphosphate (DMAP) and tryptophan to form 4-dimethylallyl-L-tryptophan. The second step is catalyzed by the methyltransferase easF that methylates 4-dimethylallyl-L-tryptophan in the presence of S-adenosyl-L-methionine, resulting in the formation of 4-dimethylallyl-L-abrine. The catalase easC and the FAD-dependent oxidoreductase easE then transform 4-dimethylallyl-L-abrine to chanoclavine-I which is further oxidized by EasD in the presence of NAD(+), resulting in the formation of chanoclavine-I aldehyde. EasA reduces chanoclavine-I aldehyde to dihydrochanoclavine-I aldehyde that spontaneously dehydrates to form 6,8-dimethyl-6,7-didehydroergoline. EasG then catalyzes the reduction of 6,8-dimethyl-6,7-didehydroergoline to form festuclavine. Hydrolysis of festuclavine by easM then leads to the formation of fumigaclavine B which is in turn acetylated by easN to fumigaclavine A. Finally, easL catalyzes the conversion of fumigaclavine A into fumigaclavine C by attaching a dimethylallyl moiety to C-2 of the indole nucleus. This Aspergillus fumigatus (strain ATCC MYA-4609 / CBS 101355 / FGSC A1100 / Af293) (Neosartorya fumigata) protein is Fumigaclavine B O-acetyltransferase easN.